Consider the following 353-residue polypeptide: Vomeronasal type-1 receptor 1 (353 aa).

The Extracellular portion of the chain corresponds to 1 to 56 (MVGDTLKLLSPLMTRYFFLLFYSTDSSDLNENQHPLDFDEMAFGKVKSGISFLIQT). A helical transmembrane segment spans residues 57–77 (GVGILGNSFLLCFYNLILFTG). At 78–84 (HKLRPTD) the chain is on the cytoplasmic side. The chain crosses the membrane as a helical span at residues 85–105 (LILSHLALANSMVLFFKGIPQ). Over 106 to 132 (TMAAFGLKYLLNDTGCKFVFYYHRVGT) the chain is Extracellular. An N-linked (GlcNAc...) asparagine glycan is attached at asparagine 117. Residues 133–153 (RVSLSTICLLNGFQAIKLNPS) form a helical membrane-spanning segment. Residues 154 to 169 (ICRWMEIKIRSPRFID) are Cytoplasmic-facing. Residues 170-190 (FCCLLCWVPHVLMNASVLLLV) form a helical membrane-spanning segment. The Extracellular portion of the chain corresponds to 191–226 (NGPLNSKNSSAKNNYGYCSYKASKRFSSLHAVLYFS). Asparagine 198 carries an N-linked (GlcNAc...) asparagine glycan. The chain crosses the membrane as a helical span at residues 227 to 247 (PDFMSLGFMVWASGSMVFFLY). At 248–274 (RHKQQVQHNHSNRLSCRPSQETRATRT) the chain is on the cytoplasmic side. The chain crosses the membrane as a helical span at residues 275–295 (IMVLVSSFFVFYSVHSFLTIW). The Extracellular segment spans residues 296–303 (TTVVANPG). The helical transmembrane segment at 304–324 (QWIVNNSVLVASYFPSRSPFV) threads the bilayer. Over 325 to 353 (LIMSDTRISQFCFACRTRKTLFPNLVVMP) the chain is Cytoplasmic.

The protein belongs to the G-protein coupled receptor 1 family.

It localises to the cell membrane. Putative pheromone receptor. In Gorilla gorilla gorilla (Western lowland gorilla), this protein is Vomeronasal type-1 receptor 1 (VN1R1).